We begin with the raw amino-acid sequence, 264 residues long: Thymidylate synthase (264 aa).

A dUMP-binding site is contributed by R21. Residue H51 coordinates (6R)-5,10-methylene-5,6,7,8-tetrahydrofolate. C146 functions as the Nucleophile in the catalytic mechanism. DUMP is bound by residues 166 to 169 (RSAD), N177, and 207 to 209 (HIY). D169 lines the (6R)-5,10-methylene-5,6,7,8-tetrahydrofolate pocket. A263 is a (6R)-5,10-methylene-5,6,7,8-tetrahydrofolate binding site.

Belongs to the thymidylate synthase family. Bacterial-type ThyA subfamily. In terms of assembly, homodimer.

Its subcellular location is the cytoplasm. It carries out the reaction dUMP + (6R)-5,10-methylene-5,6,7,8-tetrahydrofolate = 7,8-dihydrofolate + dTMP. It participates in pyrimidine metabolism; dTTP biosynthesis. In terms of biological role, catalyzes the reductive methylation of 2'-deoxyuridine-5'-monophosphate (dUMP) to 2'-deoxythymidine-5'-monophosphate (dTMP) while utilizing 5,10-methylenetetrahydrofolate (mTHF) as the methyl donor and reductant in the reaction, yielding dihydrofolate (DHF) as a by-product. This enzymatic reaction provides an intracellular de novo source of dTMP, an essential precursor for DNA biosynthesis. The protein is Thymidylate synthase of Brucella canis (strain ATCC 23365 / NCTC 10854 / RM-666).